An 837-amino-acid chain; its full sequence is Tuftelin-interacting protein 11 (837 aa).

Residues 1-13 (MSLSHLYRDGEGH) show a composition bias toward basic and acidic residues. Disordered regions lie at residues 1 to 31 (MSLSHLYRDGEGHMDDDDDERENFEITDWDL), 54 to 73 (WAERDSDEERPSFGGKRARD), and 85 to 133 (LKKG…KGFA). Residues 1–50 (MSLSHLYRDGEGHMDDDDDERENFEITDWDLQNEFNPNRQRHWQTKEEAT) form a required for interaction with DHX15 region. Position 2 is a phosphoserine (Ser-2). Residues 14–28 (MDDDDDERENFEITD) show a composition bias toward acidic residues. Residues 54-64 (WAERDSDEERP) show a composition bias toward basic and acidic residues. Phosphoserine is present on residues Ser-59 and Ser-98. Residues 91-102 (EEAELEDSEDEE) are compositionally biased toward acidic residues. Residues 103 to 116 (KPVKQDDFPKDFGP) are compositionally biased toward basic and acidic residues. Ser-144 carries the post-translational modification Phosphoserine. Residues 149 to 195 (TKGIGQKLLQKMGYVPGRGLGKNAQGIINPIEAKQRKGKGAVGAYGS) form the G-patch domain. Disordered stretches follow at residues 183–236 (QRKG…KKKP) and 289–312 (HNVPDDGLPLPSQQPPQPGKEAKA). Ser-210 is modified (phosphoserine). Positions 217–231 (EFQKELSQWRKDPSG) are enriched in basic and acidic residues. The Nuclear localization signal motif lies at 700–705 (VKDKFN). Positions 710–734 (IMNRAVSSNVGAYMQPGARENIAYL) are required for nuclear speckle localization.

This sequence belongs to the TFP11/STIP family. As to quaternary structure, identified in the spliceosome C complex. Found in the Intron Large (IL) complex, a post-mRNA release spliceosomal complex containing the excised intron, U2, U5 and U6 snRNPs, and splicing factors. Interacts with TUFT1. Interacts with DHX15; indicative for a recruitment of DHX15 to the IL complex. Interacts with GCFC2.

Its subcellular location is the cytoplasm. It localises to the nucleus. Its function is as follows. Involved in pre-mRNA splicing, specifically in spliceosome disassembly during late-stage splicing events. Intron turnover seems to proceed through reactions in two lariat-intron associated complexes termed Intron Large (IL) and Intron Small (IS). In cooperation with DHX15 seems to mediate the transition of the U2, U5 and U6 snRNP-containing IL complex to the snRNP-free IS complex leading to efficient debranching and turnover of excised introns. May play a role in the differentiation of ameloblasts and odontoblasts or in the forming of the enamel extracellular matrix. In Canis lupus familiaris (Dog), this protein is Tuftelin-interacting protein 11 (TFIP11).